Consider the following 285-residue polypeptide: Cytochrome c1 (285 aa).

The first 22 residues, 1–22 (MIRKLTLTAATALALSGGAAMA), serve as a signal peptide directing secretion. C58, C61, H62, and M207 together coordinate heme c. The helical transmembrane segment at 251-269 (AGFTAVMFLTVLSVLLYLT) threads the bilayer.

The main subunits of complex b-c1 are: cytochrome b, cytochrome c1 and the Rieske protein. In terms of processing, binds 1 heme c group covalently per subunit.

It localises to the cell membrane. In terms of biological role, component of the ubiquinol-cytochrome c reductase complex (complex III or cytochrome b-c1 complex), which is a respiratory chain that generates an electrochemical potential coupled to ATP synthesis. c1 functions as an electron donor to cytochrome c. The chain is Cytochrome c1 (petC) from Cereibacter sphaeroides (Rhodobacter sphaeroides).